A 631-amino-acid chain; its full sequence is 1-deoxy-D-xylulose-5-phosphate synthase (631 aa).

Residues His76 and 117 to 119 contribute to the thiamine diphosphate site; that span reads AHS. Mg(2+) is bound at residue Asp148. Thiamine diphosphate-binding positions include 149-150, Asn177, Tyr284, and Glu365; that span reads GA. Asn177 serves as a coordination point for Mg(2+).

Belongs to the transketolase family. DXPS subfamily. As to quaternary structure, homodimer. Mg(2+) is required as a cofactor. Thiamine diphosphate serves as cofactor.

The catalysed reaction is D-glyceraldehyde 3-phosphate + pyruvate + H(+) = 1-deoxy-D-xylulose 5-phosphate + CO2. Its pathway is metabolic intermediate biosynthesis; 1-deoxy-D-xylulose 5-phosphate biosynthesis; 1-deoxy-D-xylulose 5-phosphate from D-glyceraldehyde 3-phosphate and pyruvate: step 1/1. Catalyzes the acyloin condensation reaction between C atoms 2 and 3 of pyruvate and glyceraldehyde 3-phosphate to yield 1-deoxy-D-xylulose-5-phosphate (DXP). This chain is 1-deoxy-D-xylulose-5-phosphate synthase, found in Methylibium petroleiphilum (strain ATCC BAA-1232 / LMG 22953 / PM1).